The chain runs to 756 residues: LIM domain and actin-binding protein 1 (756 aa).

Met-1 is subject to N-acetylmethionine. 2 positions are modified to phosphoserine: Ser-15 and Ser-55. The span at Ala-44–Asn-56 shows a compositional bias: basic and acidic residues. Disordered stretches follow at residues Ala-44–Ile-183 and Gln-204–Lys-377. A compositionally biased stretch (low complexity) spans Glu-107 to Ala-118. Ser-130 is subject to Phosphoserine. Residues Arg-140–Thr-173 show a composition bias toward basic and acidic residues. A Required for interaction with NPC1L1 motif is present at residues Ser-164–His-166. Position 221 is a phosphoserine (Ser-221). Residue Tyr-225 is modified to Phosphotyrosine. A phosphoserine mark is found at Ser-226 and Ser-238. Positions Glu-245–Glu-254 are enriched in basic and acidic residues. Position 259 is a phosphoserine (Ser-259). Residues Val-274 to Leu-287 are compositionally biased toward polar residues. Residues Ile-294–Glu-303 are compositionally biased toward basic and acidic residues. 5 positions are modified to phosphoserine: Ser-339, Ser-346, Ser-358, Ser-365, and Ser-370. Residues Glu-384–Ser-444 enclose the LIM zinc-binding domain. Position 435 is an N6-succinyllysine (Lys-435). Phosphoserine is present on Ser-486. Residues Val-489 to Ser-509 are required for interaction with MYO5B. Residues Ala-508–Val-726 form a disordered region. Positions Leu-512–Lys-523 are enriched in basic and acidic residues. The span at Glu-533–Glu-542 shows a compositional bias: low complexity. Residues Trp-552–Ala-563 show a composition bias toward basic and acidic residues. 4 positions are modified to phosphoserine: Ser-597, Ser-600, Ser-605, and Ser-613. Basic and acidic residues predominate over residues Ala-627 to Ala-637. The segment covering Ser-638–Ser-651 has biased composition (polar residues). Basic and acidic residues predominate over residues Lys-652 to Gln-667. Over residues Leu-691 to Gln-721 the composition is skewed to polar residues. Residues Ser-695, Ser-723, and Ser-738 each carry the phosphoserine modification.

As to quaternary structure, interacts with NPC1L1; bridges NPC1L1 with MYO5B. Interacts with MYO5B; bridges MYO5B with NPC1L1. Interacts with PXN; this complex stabilizes actin dynamics. Interacts with F-actin and G-actin. Interacts with LUZP1 (via C-terminus); both proteins restrict ciliation and may work together to regulate this process. Binds RAB40B (GTP-bound); interaction influences LIMA1 subcellular localization in lamellipodia during cell migration. In terms of processing, phosphorylation of the C-terminal region by MAPK1/MAPK3 reduces its association with F-actin and contributes to actin filament reorganization and enhances cell motility. Ubiquitinated by the ECS(RAB40B) complex leading to its degradation. Widely expressed. Highest levels of isoform 2 are expressed in lung, spleen and small intestine. Isoform 2 is expressed at higher levels than isoform 1 in most tissues except liver, fat and kidney. Isoform 1 and isoform 2 are expressed at low levels in skeletal muscle, heart, stomach and lymph.

Its subcellular location is the cytoplasm. The protein resides in the cell junction. It localises to the focal adhesion. It is found in the cytoskeleton. The protein localises to the stress fiber. Its subcellular location is the cell membrane. The protein resides in the cell projection. It localises to the ruffle. It is found in the lamellipodium. In terms of biological role, actin-binding protein involved in actin cytoskeleton regulation and dynamics. Increases the number and size of actin stress fibers and inhibits membrane ruffling. Inhibits actin filament depolymerization. Bundles actin filaments, delays filament nucleation and reduces formation of branched filaments. Acts as a negative regulator of primary cilium formation. Plays a role in cholesterol homeostasis. Influences plasma cholesterol levels through regulation of intestinal cholesterol absorption. May act as a scaffold protein by regulating NPC1L1 transportation, an essential protein for cholesterol absorption, to the plasma membrane by recruiting MYO5B to NPC1L1, and thus facilitates cholesterol uptake. This is LIM domain and actin-binding protein 1 from Sus scrofa (Pig).